A 654-amino-acid chain; its full sequence is Potassium voltage-gated channel subfamily A member 4 (654 aa).

At 1 to 305 (MEVAMVSAES…LLFEYPESSS (305 aa)) the chain is on the cytoplasmic side. The disordered stretch occupies residues 24 to 145 (QARARERERL…EEGRFYYSEE (122 aa)). The segment covering 36 to 50 (SRAAAAAAVAAATAA) has biased composition (low complexity). Over residues 81–99 (GSRRRRRQRTEKKKLHHRQ) the composition is skewed to basic residues. At Ser122 the chain carries Phosphoserine. Acidic residues predominate over residues 122–137 (SEEEEDEEEEEEEEEE). The helical transmembrane segment at 306 to 327 (PARGIAIVSVLVILISIVIFCL) threads the bilayer. The Extracellular portion of the chain corresponds to 328–371 (ETLPEFRDDRDLIMALSAGGHSRLLNDTSAPHLENSGHTIFNDP). Asn353 carries N-linked (GlcNAc...) asparagine glycosylation. The helical transmembrane segment at 372-393 (FFIVETVCIVWFSFEFVVRCFA) threads the bilayer. The Cytoplasmic segment spans residues 394–404 (CPSQALFFKNI). A helical transmembrane segment spans residues 405 to 425 (MNIIDIVSILPYFITLGTDLA). Topologically, residues 426 to 440 (QQQGGGNGQQQQAMS) are extracellular. The chain crosses the membrane as a helical; Voltage-sensor span at residues 441–461 (FAILRIIRLVRVFRIFKLSRH). Topologically, residues 462–476 (SKGLQILGHTLRASM) are cytoplasmic. Residues 463–476 (KGLQILGHTLRASM) are S4-S5 linker. A helical transmembrane segment spans residues 477–498 (RELGLLIFFLFIGVILFSSAVY). Residues 499–512 (FAEADEPTTHFQSI) lie on the Extracellular side of the membrane. Positions 513–524 (PDAFWWAVVTMT) form an intramembrane region, helical. The Selectivity filter motif lies at 525–530 (TVGYGD). An intramembrane segment occupies 525–532 (TVGYGDMK). Topologically, residues 533-539 (PITVGGK) are extracellular. Residues 540-568 (IVGSLCAIAGVLTIALPVPVIVSNFNYFY) traverse the membrane as a helical segment. The Cytoplasmic segment spans residues 569–654 (HRETENEEQT…SNAKAVETDV (86 aa)). Ser600 carries the post-translational modification Phosphoserine; by PKA. Over residues 630–641 (CQGKGDESETDK) the composition is skewed to basic and acidic residues. The segment at 630–654 (CQGKGDESETDKNNCSNAKAVETDV) is disordered. The PDZ-binding motif lies at 652–654 (TDV).

This sequence belongs to the potassium channel family. A (Shaker) (TC 1.A.1.2) subfamily. Kv1.4/KCNA4 sub-subfamily. In terms of assembly, homotetramer and heterotetramer of potassium channel proteins. Interacts with KCNAB1 and KCNAB2. Interacts with DLG1, DLG2 and DLG4 via their PDZ domains. Interacts with SIGMAR1. Detected in a complex with KCNA1. Interacts with KCNA2. Part of a complex containing KCNA1, KCNAB1 and LGI1. Interacts (via cytoplasmic N-terminal domain) with KCNRG. As to expression, expressed in the brain, lens and retina.

Its subcellular location is the cell membrane. The protein resides in the cell projection. The protein localises to the axon. It catalyses the reaction K(+)(in) = K(+)(out). In terms of biological role, voltage-gated potassium channel that mediates transmembrane potassium transport in excitable membranes. Forms tetrameric potassium-selective channels through which potassium ions pass in accordance with their electrochemical gradient. The channel alternates between opened and closed conformations in response to the voltage difference across the membrane. Can form functional homotetrameric channels and heterotetrameric channels that contain variable proportions of KCNA1, KCNA2, KCNA4, KCNA5, and possibly other family members as well; channel properties depend on the type of alpha subunits that are part of the channel. Channel properties are modulated by cytoplasmic beta subunits that regulate the subcellular location of the alpha subunits and promote rapid inactivation. In vivo, membranes probably contain a mixture of heteromeric potassium channel complexes, making it difficult to assign currents observed in intact tissues to any particular potassium channel family member. Homotetrameric KCNA4 forms a potassium channel that opens in response to membrane depolarization, followed by rapid spontaneous channel closure. Likewise, a heterotetrameric channel formed by KCNA1 and KCNA4 shows rapid inactivation. The sequence is that of Potassium voltage-gated channel subfamily A member 4 (Kcna4) from Mus musculus (Mouse).